The primary structure comprises 426 residues: Histone-binding protein RBBP7 (426 aa).

WD repeat units lie at residues 47–123 (QWLP…KINH), 129–174 (RARY…LRLR), 182–218 (GLSW…KIVD), 229–270 (VVED…HSVD), 276–313 (VNCL…LHSF), 319–370 (EIFQ…LFIH), and 377–404 (ISDF…VWQM).

Belongs to the WD repeat RBAP46/RBAP48/MSI1 family. As to quaternary structure, binds directly to helix 1 of the histone fold of histone H4, a region that is not accessible when H4 is in chromatin.

Its subcellular location is the nucleus. Its function is as follows. Core histone-binding subunit that may target chromatin remodeling factors, histone acetyltransferases and histone deacetylases to their histone substrates in a manner that is regulated by nucleosomal DNA. Component of several complexes which regulate chromatin metabolism. This is Histone-binding protein RBBP7 (rbbp7) from Danio rerio (Zebrafish).